The primary structure comprises 438 residues: Tol-Pal system protein TolB (438 aa).

An N-terminal signal peptide occupies residues 1–35 (MITMKNILKLRATGLLLLLLLMISVLGNGIGQAMA).

It belongs to the TolB family. In terms of assembly, the Tol-Pal system is composed of five core proteins: the inner membrane proteins TolA, TolQ and TolR, the periplasmic protein TolB and the outer membrane protein Pal. They form a network linking the inner and outer membranes and the peptidoglycan layer.

Its subcellular location is the periplasm. Functionally, part of the Tol-Pal system, which plays a role in outer membrane invagination during cell division and is important for maintaining outer membrane integrity. This chain is Tol-Pal system protein TolB, found in Desulfotalea psychrophila (strain LSv54 / DSM 12343).